The chain runs to 111 residues: uncharacterized protein (111 aa).

The next 2 membrane-spanning stretches (helical) occupy residues 27-47 (IIVL…GYKF) and 80-100 (IFTG…ISAI).

It localises to the membrane. This is an uncharacterized protein from Acanthamoeba polyphaga (Amoeba).